The following is a 728-amino-acid chain: Myb-related protein A (728 aa).

Residues 1–31 (MAGRARSEDEEEDGQFTEHDYDVSLQKGPKK) form a disordered region. HTH myb-type domains follow at residues 30 to 80 (KKPW…HKVL), 81 to 136 (SPEL…NPDV), and 137 to 187 (KKSS…KRKV). 3 consecutive DNA-binding regions (H-T-H motif) follow at residues 57–80 (WGVVARHFINRSEVQCQHRWHKVL), 109–132 (WSIIAKHLKGRIGKQCRERWHNHL), and 160–183 (WAEIAKLLPGRTDNSIKNHWNSTM). The transcriptional activation domain stretch occupies residues 230–293 (IPRYSSLSHD…RKRVPSGSSL (64 aa)). Residues 296–534 (SESYHMGESM…IRRSLMAVTP (239 aa)) are negative regulatory domain.

In terms of assembly, component of the DREAM complex.

It localises to the nucleus. Its function is as follows. Transcription factor that specifically recognizes the sequence 5'-YAAC[GT]G-3'. Acts as a master regulator of male meiosis by promoting expression of piRNAs. The piRNA metabolic process mediates the repression of transposable elements during meiosis by forming complexes composed of piRNAs and Piwi proteins and governs the methylation and subsequent repression of transposons, which is essential for the germline integrity. The chain is Myb-related protein A (mybl1) from Xenopus laevis (African clawed frog).